The chain runs to 816 residues: Leucine--tRNA ligase (816 aa).

Residues 40–51 (SYPSGSQLHAGH) carry the 'HIGH' region motif. The short motif at 576-580 (KMSKS) is the 'KMSKS' region element. Lys579 is an ATP binding site.

Belongs to the class-I aminoacyl-tRNA synthetase family.

It is found in the cytoplasm. It catalyses the reaction tRNA(Leu) + L-leucine + ATP = L-leucyl-tRNA(Leu) + AMP + diphosphate. The protein is Leucine--tRNA ligase of Clostridium perfringens (strain 13 / Type A).